Here is a 454-residue protein sequence, read N- to C-terminus: Notoamide E oxidase notB (454 aa).

The chain crosses the membrane as a helical span at residues 15 to 35; sequence SPAELTVIIVGLGIAGLTAAI. FAD is bound by residues glutamate 48 and glycine 61. N-linked (GlcNAc...) asparagine glycosylation is present at asparagine 75. Arginine 121 provides a ligand contact to FAD. Catalysis depends on residues arginine 199 and tyrosine 229. FAD is bound by residues aspartate 322 and glycine 335.

This sequence belongs to the paxM FAD-dependent monooxygenase family. The cofactor is FAD.

It localises to the membrane. It catalyses the reaction notoamide E + NADPH + O2 + H(+) = notoamide C + NADP(+) + H2O. It carries out the reaction notoamide E + NADPH + O2 + H(+) = notoamide D + NADP(+) + H2O. It participates in alkaloid biosynthesis. FAD-dependent monooxygenase; part of the gene cluster that mediates the biosynthesis of notoamide, a fungal indole alkaloid that belongs to a family of natural products containing a characteristic bicyclo[2.2.2]diazaoctane core. The first step of notoamide biosynthesis involves coupling of L-proline and L-tryptophan by the bimodular NRPS notE, to produce cyclo-L-tryptophan-L-proline called brevianamide F. The reverse prenyltransferase notF then acts as a deoxybrevianamide E synthase and converts brevianamide F to deoxybrevianamide E via reverse prenylation at C-2 of the indole ring leading to the bicyclo[2.2.2]diazaoctane core. Deoxybrevianamide E is further hydroxylated at C-6 of the indole ring, likely catalyzed by the cytochrome P450 monooxygenase notG, to yield 6-hydroxy-deoxybrevianamide E. 6-hydroxy-deoxybrevianamide E is a specific substrate of the prenyltransferase notC for normal prenylation at C-7 to produce 6-hydroxy-7-prenyl-deoxybrevianamide, also called notoamide S. As the proposed pivotal branching point in notoamide biosynthesis, notoamide S can be diverted to notoamide E through an oxidative pyran ring closure putatively catalyzed by either notH cytochrome P450 monooxygenase or the notD FAD-linked oxidoreductase. This step would be followed by an indole 2,3-epoxidation-initiated pinacol-like rearrangement catalyzed by the notB FAD-dependent monooxygenase leading to the formation of notoamide C and notoamide D. On the other hand notoamide S is converted to notoamide T by notH (or notD), a bifunctional oxidase that also functions as the intramolecular Diels-Alderase responsible for generation of (+)-notoamide T. To generate antipodal (-)-notoaminide T, notH' (or notD') in Aspergillus versicolor is expected to catalyze a Diels-Alder reaction leading to the opposite stereochemistry. The remaining oxidoreductase notD (or notH) likely catalyzes the oxidative pyran ring formation to yield (+)-stephacidin A. The FAD-dependent monooxygenase notI is highly similar to notB and is predicted to catalyze a similar conversion from (+)-stephacidin A to (-)-notoamide B via the 2,3-epoxidation of (+)-stephacidin A followed by a pinacol-type rearrangement. Finally, it remains unclear which enzyme could be responsible for the final hydroxylation steps leading to notoamide A and sclerotiamide. This chain is Notoamide E oxidase notB, found in Aspergillus sp. (strain MF297-2).